The following is a 541-amino-acid chain: uncharacterized protein (541 aa).

A signal peptide spans 1 to 22 (MQFKYGALIFSGFLGLSIVLAS). A lipid anchor (N-palmitoyl cysteine) is attached at cysteine 23. Cysteine 23 is lipidated: S-diacylglycerol cysteine. Disordered regions lie at residues 446–468 (APGQ…NGNL) and 480–514 (KTKT…TENQ). Residues 448–460 (GQSSQKEGGQQQS) are compositionally biased toward low complexity. Positions 480–490 (KTKTEVKKTED) are enriched in basic and acidic residues.

The protein belongs to the MG185/MG260 family.

Its subcellular location is the cell membrane. This is an uncharacterized protein from Mycoplasma pneumoniae (strain ATCC 29342 / M129 / Subtype 1) (Mycoplasmoides pneumoniae).